The sequence spans 563 residues: BOS complex subunit NCLN (563 aa).

Positions 1 to 42 are cleaved as a signal peptide; the sequence is MLEEAGEVLENMLKASCLPLGFIVFLPAVLLLVAPPLPAADA. Over 43-522 the chain is Lumenal; sequence AHEFTVYRMQ…VMNAYRVKPA (480 aa). Residues Asn-241 and Asn-428 are each glycosylated (N-linked (GlcNAc...) asparagine). The helical transmembrane segment at 523–543 threads the bilayer; it reads IFDLLLAVCIGAYLGMAYTAV. The Cytoplasmic portion of the chain corresponds to 544–563; sequence QHFDLLYKTVQRLLVKAKTQ.

The protein belongs to the nicastrin family. As to quaternary structure, component of the back of Sec61 (BOS) complex, composed of NCLN/Nicalin, NOMO1 and TMEM147. The BOS complex is part of the multi-pass translocon (MPT) complex, composed of three subcomplexes, the GEL complex (composed of RAB5IF/OPTI and TMCO1), the BOS complex (composed of NCLN/Nicalin, NOMO1 and TMEM147) and the PAT complex (composed of WDR83OS/Asterix and CCDC47). The MPT complex associates with the SEC61 complex.

It localises to the endoplasmic reticulum membrane. Component of the multi-pass translocon (MPT) complex that mediates insertion of multi-pass membrane proteins into the lipid bilayer of membranes. The MPT complex takes over after the SEC61 complex: following membrane insertion of the first few transmembrane segments of proteins by the SEC61 complex, the MPT complex occludes the lateral gate of the SEC61 complex to promote insertion of subsequent transmembrane regions. May antagonize Nodal signaling and subsequent organization of axial structures during mesodermal patterning, via its interaction with NOMO. The sequence is that of BOS complex subunit NCLN from Canis lupus familiaris (Dog).